A 299-amino-acid chain; its full sequence is Lathosterol oxidase (299 aa).

A run of 3 helical transmembrane segments spans residues 32–52, 79–99, and 117–137; these read ISLLIVTNVGAYILYFFCATL, FTVQALPWISILTVALFLLEI, and FELVVSIISFLFFTDMFIYWI. Residues 124–252 enclose the Fatty acid hydroxylase domain; sequence ISFLFFTDMF…YFTLWDRIGG (129 aa). Positions 138-143 match the Histidine box-1 motif; it reads HRGLHH. The Histidine box-2 motif lies at 151–155; the sequence is HKPHH. A helical transmembrane segment spans residues 186–206; it reads IFPLHKVVYLSLYILVNIWTI. The Histidine box-3 signature appears at 228–233; that stretch reads HHTDHH. Residue serine 253 is modified to Phosphoserine. Residues 274 to 299 are disordered; it reads EGKRSSHSGNGCKNEKLFNGEFTKTE. Positions 286–299 are enriched in basic and acidic residues; sequence KNEKLFNGEFTKTE.

Belongs to the sterol desaturase family. Fe cation serves as cofactor.

Its subcellular location is the endoplasmic reticulum membrane. The catalysed reaction is a Delta(7)-sterol + 2 Fe(II)-[cytochrome b5] + O2 + 2 H(+) = a Delta(5),Delta(7)-sterol + 2 Fe(III)-[cytochrome b5] + 2 H2O. The enzyme catalyses lathosterol + 2 Fe(II)-[cytochrome b5] + O2 + 2 H(+) = 7-dehydrocholesterol + 2 Fe(III)-[cytochrome b5] + 2 H2O. It carries out the reaction 5alpha-cholesta-7,24-dien-3beta-ol + 2 Fe(II)-[cytochrome b5] + O2 + 2 H(+) = 7-dehydrodesmosterol + 2 Fe(III)-[cytochrome b5] + 2 H2O. The protein operates within steroid biosynthesis; cholesterol biosynthesis. Catalyzes the penultimate step of the biosynthesis of cholesterol, the dehydrogenation of lathosterol into 7-dehydrocholesterol (7-DHC). Cholesterol is the major sterol component in mammalian membranes and a precursor for bile acid and steroid hormone synthesis. In addition to its essential role in cholesterol biosynthesis, it also indirectly regulates ferroptosis through the production of 7-DHC. By diverting the spread of damage caused by peroxyl radicals from the phospholipid components to its sterol nucleus, 7-DHC prevents this form of cell death. This is Lathosterol oxidase from Homo sapiens (Human).